We begin with the raw amino-acid sequence, 423 residues long: Histidine--tRNA ligase (423 aa).

Belongs to the class-II aminoacyl-tRNA synthetase family. As to quaternary structure, homodimer.

It is found in the cytoplasm. The catalysed reaction is tRNA(His) + L-histidine + ATP = L-histidyl-tRNA(His) + AMP + diphosphate + H(+). This Haemophilus influenzae (strain 86-028NP) protein is Histidine--tRNA ligase.